Reading from the N-terminus, the 806-residue chain is Putative phage-related protein YobO (806 aa).

The interval 1-23 is disordered; that stretch reads MVHFKNCPDPSLNANSQSHPEFS. Polar residues predominate over residues 12–21; it reads LNANSQSHPE. 6 PbH1 repeats span residues 199–221, 237–259, 260–292, 294–315, 419–441, and 448–470; these read VEYG…DITS, SRYI…TTHY, SEYI…EIDD, SRHV…EVKA, SQNI…DINL, and TDYI…SIGG.

The chain is Putative phage-related protein YobO (yobO) from Bacillus subtilis (strain 168).